A 354-amino-acid chain; its full sequence is Acyl-CoA-binding domain-containing protein 2 (354 aa).

A helical; Signal-anchor transmembrane segment spans residues 11-31; sequence VILGLIFSYLLAKLISIVVTF. The segment at 75–96 is disordered; the sequence is AEQGSSRSDSVAGDDSEEDDDW. Residues 86–96 show a composition bias toward acidic residues; it reads AGDDSEEDDDW. The region spanning 104-194 is the ACB domain; that stretch reads LDEAFSAATL…VTQLYPTWLD (91 aa). An acyl-CoA contacts are provided by residues 136–140, Lys162, and Tyr181; that span reads YGLYK. 2 ANK repeats span residues 265-294 and 298-327; these read EGRT…DVNA and EGQT…NTAA.

It belongs to the ACBP family. In terms of assembly, interacts (via ankyrin repeats) with HIPP26 and the ethylene-responsive element-binding proteins RAP2-3/EBP and RAP2-12. Interacts with CSE. In terms of tissue distribution, mostly expressed in roots and flowers, and, to a lower extent, in stems, pods and leaves (at protein level).

Its subcellular location is the cell membrane. It is found in the endoplasmic reticulum membrane. The protein localises to the peroxisome membrane. In terms of biological role, binds medium- and long-chain acyl-CoA esters with very high affinity. Can interact in vitro with palmitoyl-CoA, but not with oleoyl-CoA. Binds to lead ions (Pb). May function as an intracellular carrier of acyl-CoA esters. Required for proper phospholipid and, to a lower extent, galactolipid composition. The polypeptide is Acyl-CoA-binding domain-containing protein 2 (ACBP2) (Arabidopsis thaliana (Mouse-ear cress)).